We begin with the raw amino-acid sequence, 162 residues long: Caveolin-2 (162 aa).

The Cytoplasmic segment spans residues 1–86 (MGLETEKADV…FEISKYVMYK (86 aa)). Phosphotyrosine; by SRC is present on tyrosine 19. Phosphoserine is present on residues serine 20 and serine 23. Phosphotyrosine; by SRC is present on tyrosine 27. Serine 36 carries the phosphoserine modification. An intramembrane region (helical) is located at residues 87–107 (FLTVFLAIPLAFLAGILFATL). Residues 108–162 (SCLHIWIIMPFVKTCLMVLPSVQTIWKSVTDAIIAPLCTSIGRSFSSVSLQLSQD) lie on the Cytoplasmic side of the membrane.

It belongs to the caveolin family. In terms of assembly, monomer or homodimer. Interacts with CAV1; the interaction forms a stable heterooligomeric complex that is required for targeting to lipid rafts and for caveolae formation. Tyrosine phosphorylated forms do not form heterooligomers with the Tyr-19-phosphorylated form existing as a monomer or dimer, and the Tyr-27-form as a monomer only. Interacts (tyrosine phosphorylated form) with the SH2 domain-containing proteins, RASA1, NCK1 and SRC. Interacts (tyrosine phosphorylated form) with INSR, the interaction (Tyr-27-phosphorylated form) is increased on insulin stimulation. Interacts (Tyr-19 phosphorylated form) with MAPK1 (phosphorylated form); the interaction, promoted by insulin, leads to nuclear location and MAPK1 activation. Interacts with STAT3; the interaction is increased on insulin-induced tyrosine phosphorylation leading to STAT activation. Phosphorylated on serine and tyrosine residues. CAV1 promotes phosphorylation on Ser-23 which then targets the complex to the plasma membrane, lipid rafts and caveolae. Phosphorylation on Ser-36 appears to modulate mitosis in endothelial cells. Phosphorylation on both Tyr-19 and Tyr-27 is required for insulin-induced 'Ser-727' phosphorylation of STAT3 and its activation. Phosphorylation on Tyr-19 is required for insulin-induced phosphorylation of MAPK1 and DNA binding of STAT3. Tyrosine phosphorylation is induced by both EGF and insulin (By. similarity).

The protein resides in the nucleus. The protein localises to the cytoplasm. It localises to the golgi apparatus membrane. Its subcellular location is the cell membrane. It is found in the membrane. The protein resides in the caveola. May act as a scaffolding protein within caveolar membranes. Interacts directly with G-protein alpha subunits and can functionally regulate their activity. Acts as an accessory protein in conjunction with CAV1 in targeting to lipid rafts and driving caveolae formation. The Ser-36 phosphorylated form has a role in modulating mitosis in endothelial cells. Positive regulator of cellular mitogenesis of the MAPK signaling pathway. Required for the insulin-stimulated nuclear translocation and activation of MAPK1 and STAT3, and the subsequent regulation of cell cycle progression. The sequence is that of Caveolin-2 (CAV2) from Callithrix jacchus (White-tufted-ear marmoset).